A 123-amino-acid polypeptide reads, in one-letter code: Thioredoxin domain-containing protein 17 (123 aa).

Residues 41 to 123 (SWCPDCVKAE…DLVRMMFTED (83 aa)) form the Thioredoxin domain. Catalysis depends on nucleophile residues Cys-43 and Cys-46. Cysteines 43 and 46 form a disulfide.

It belongs to the thioredoxin family.

It localises to the cytoplasm. Functionally, disulfide reductase. May participate in various redox reactions through the reversible oxidation of its active center dithiol to a disulfide and catalyze dithiol-disulfide exchange reactions. Has peroxidase activity and may contribute to the elimination of cellular hydrogen peroxide. This is Thioredoxin domain-containing protein 17 (txndc17) from Danio rerio (Zebrafish).